The chain runs to 177 residues: Small ribosomal subunit protein uS5 (177 aa).

The region spanning 21–84 (LKEKMISVNR…DEARRGMIKI (64 aa)) is the S5 DRBM domain.

Belongs to the universal ribosomal protein uS5 family. In terms of assembly, part of the 30S ribosomal subunit. Contacts proteins S4 and S8.

In terms of biological role, with S4 and S12 plays an important role in translational accuracy. Its function is as follows. Located at the back of the 30S subunit body where it stabilizes the conformation of the head with respect to the body. In Nitrosomonas eutropha (strain DSM 101675 / C91 / Nm57), this protein is Small ribosomal subunit protein uS5.